A 652-amino-acid polypeptide reads, in one-letter code: Leucine-rich repeat-containing protein 4 (652 aa).

Positions 1–40 (MKLLWQVTVHHTWNAVLLPVVYLTAQVWILCAAIAAAASA) are cleaved as a signal peptide. An LRRNT domain is found at 41 to 74 (GPQNCPSVCSCSNQFSKVVCTRRGLSEVPQGIPS). At 41–526 (GPQNCPSVCS…SLDEVMKTTK (486 aa)) the chain is on the extracellular side. 2 disulfide bridges follow: C45/C51 and C49/C60. LRR repeat units follow at residues 75–96 (NTRY…TFRH), 99–120 (HLEV…AFNG), 123–144 (SLNT…AFEY), 147–168 (KLRE…AFNR), 171–193 (SLMR…AFEG), 196–217 (NLKY…TPLV), 218–239 (GLEE…SFHG), 242–263 (SLKK…AFDG), and 266–287 (SLVE…LFTP). 8 N-linked (GlcNAc...) asparagine glycosylation sites follow: N276, N321, N362, N387, N409, N433, N439, and N449. In terms of domain architecture, LRRCT spans 299–351 (NPWNCDCDILWLAWWLREYIPTNSTCCGRCHAPMHMRGRYLVEVDQAAFQCSA). Intrachain disulfides connect C303–C328 and C305–C349. Residues 352–441 (PFIMDAPRDL…SNASAYLNVS (90 aa)) enclose the Ig-like domain. C373 and C423 are disulfide-bonded. Residues 527–547 (IIIGCFVAVTLLAAAMLIVFY) form a helical membrane-spanning segment. Topologically, residues 548–652 (KLRKRHQQRS…TKDKVQETQI (105 aa)) are cytoplasmic.

In terms of assembly, interacts (via LRR repeats) with NTNG2. Interacts with DLG4. Forms a complex with DLG4 and with NMDA receptors. N-glycosylated. Specifically expressed in brain. In the hippocampus, parietal cortex and piriform cortex expressed in proximal segments of CA1 pyramidal neurons.

The protein localises to the membrane. It localises to the postsynaptic cell membrane. Synaptic adhesion protein. Regulates the formation of exitatory synapses through the recruitment of pre-and-postsynaptic proteins. Organize the lamina/pathway-specific differentiation of dendrites. Plays an important role for auditory synaptic responses. Involved in the suppression of glioma. This chain is Leucine-rich repeat-containing protein 4 (Lrrc4), found in Mus musculus (Mouse).